A 70-amino-acid polypeptide reads, in one-letter code: LVVSVTSRRVRFWDDFERDENFEEERPYLRNVKRACNDYKSSSYCRSVGSRNECGIHKYRMYCRKTCGSC.

Positions 36–70 constitute a ShKT domain; that stretch reads CNDYKSSSYCRSVGSRNECGIHKYRMYCRKTCGSC. Disulfide bonds link Cys36/Cys70, Cys45/Cys63, and Cys54/Cys67. Residues 58–59 form a crucial for binding to potassium channels region; that stretch reads KY.

It belongs to the sea anemone type 1 potassium channel toxin family. Type 1b subfamily.

It is found in the secreted. It localises to the nematocyst. In terms of biological role, inhibits voltage-gated potassium channels (Kv1/KCNA). The polypeptide is U-actitoxin-Avd11a (Anemonia viridis (Snakelocks anemone)).